Consider the following 360-residue polypeptide: DNA replication and repair protein RecF (360 aa).

30–37 (GDNAQGKT) provides a ligand contact to ATP.

The protein belongs to the RecF family.

It localises to the cytoplasm. In terms of biological role, the RecF protein is involved in DNA metabolism; it is required for DNA replication and normal SOS inducibility. RecF binds preferentially to single-stranded, linear DNA. It also seems to bind ATP. In Lachnoclostridium phytofermentans (strain ATCC 700394 / DSM 18823 / ISDg) (Clostridium phytofermentans), this protein is DNA replication and repair protein RecF.